The chain runs to 300 residues: Ribosomal RNA small subunit methyltransferase H (300 aa).

Residues 46 to 48, aspartate 65, phenylalanine 92, aspartate 107, and glutamine 114 contribute to the S-adenosyl-L-methionine site; that span reads GGH.

This sequence belongs to the methyltransferase superfamily. RsmH family.

Its subcellular location is the cytoplasm. The catalysed reaction is cytidine(1402) in 16S rRNA + S-adenosyl-L-methionine = N(4)-methylcytidine(1402) in 16S rRNA + S-adenosyl-L-homocysteine + H(+). Its function is as follows. Specifically methylates the N4 position of cytidine in position 1402 (C1402) of 16S rRNA. In Prochlorococcus marinus (strain AS9601), this protein is Ribosomal RNA small subunit methyltransferase H.